Consider the following 202-residue polypeptide: 3-isopropylmalate dehydratase small subunit (202 aa).

Belongs to the LeuD family. LeuD type 1 subfamily. In terms of assembly, heterodimer of LeuC and LeuD.

It carries out the reaction (2R,3S)-3-isopropylmalate = (2S)-2-isopropylmalate. It functions in the pathway amino-acid biosynthesis; L-leucine biosynthesis; L-leucine from 3-methyl-2-oxobutanoate: step 2/4. Functionally, catalyzes the isomerization between 2-isopropylmalate and 3-isopropylmalate, via the formation of 2-isopropylmaleate. In Rhizobium rhizogenes (strain K84 / ATCC BAA-868) (Agrobacterium radiobacter), this protein is 3-isopropylmalate dehydratase small subunit.